The primary structure comprises 279 residues: Tryptophan 2,3-dioxygenase (279 aa).

Substrate-binding positions include 48-52 (FIVIH), Y110, and R114. H237 serves as a coordination point for heme. Residue T251 participates in substrate binding.

The protein belongs to the tryptophan 2,3-dioxygenase family. Homotetramer. It depends on heme as a cofactor.

The catalysed reaction is L-tryptophan + O2 = N-formyl-L-kynurenine. Its pathway is amino-acid degradation; L-tryptophan degradation via kynurenine pathway; L-kynurenine from L-tryptophan: step 1/2. Heme-dependent dioxygenase that catalyzes the oxidative cleavage of the L-tryptophan (L-Trp) pyrrole ring and converts L-tryptophan to N-formyl-L-kynurenine. Catalyzes the oxidative cleavage of the indole moiety. The polypeptide is Tryptophan 2,3-dioxygenase (Bacillus cereus (strain ATCC 10987 / NRS 248)).